The sequence spans 285 residues: Phosphoribosylaminoimidazole-succinocarboxamide synthase (285 aa).

It belongs to the SAICAR synthetase family.

The enzyme catalyses 5-amino-1-(5-phospho-D-ribosyl)imidazole-4-carboxylate + L-aspartate + ATP = (2S)-2-[5-amino-1-(5-phospho-beta-D-ribosyl)imidazole-4-carboxamido]succinate + ADP + phosphate + 2 H(+). The protein operates within purine metabolism; IMP biosynthesis via de novo pathway; 5-amino-1-(5-phospho-D-ribosyl)imidazole-4-carboxamide from 5-amino-1-(5-phospho-D-ribosyl)imidazole-4-carboxylate: step 1/2. The protein is Phosphoribosylaminoimidazole-succinocarboxamide synthase of Leptospira interrogans serogroup Icterohaemorrhagiae serovar copenhageni (strain Fiocruz L1-130).